The following is a 202-amino-acid chain: Small ribosomal subunit protein uS4 (202 aa).

The segment at 17–42 (ELPGLSRKTPRRAYPPGQHGQARKKR) is disordered. An S4 RNA-binding domain is found at 90–152 (MRLDNTIFRL…DASRKLIETH (63 aa)).

It belongs to the universal ribosomal protein uS4 family. As to quaternary structure, part of the 30S ribosomal subunit. Contacts protein S5. The interaction surface between S4 and S5 is involved in control of translational fidelity.

Functionally, one of the primary rRNA binding proteins, it binds directly to 16S rRNA where it nucleates assembly of the body of the 30S subunit. In terms of biological role, with S5 and S12 plays an important role in translational accuracy. This Acaryochloris marina (strain MBIC 11017) protein is Small ribosomal subunit protein uS4.